The following is a 348-amino-acid chain: MTAQPQVLTIRRPDDWHVHLRDGDMLKTVVPYTSETYGRAIVMPNLAPPVTTVEAAIAYRQRILDAVPEHHAFEPLMTCYLTDTLDADELERGFQQGVFTAAKLYPANATTNSSHGVTSVDNIMTVLERMEKLGMPLLVHGEVTHSEVDIFDREARFIETVMEPLRKRLQGLKVVFEHITTKDAADYVREGNSLLGATITPQHLMFNRNHMLAGGIRPHLYCLPILKRNVHQQALRELVASGCERVFLGTDSAPHARHRKETSCGCAGCFNAPSALGAYATVFEEMNALAHFEAFASLNGPGFYGLPVNEGTVTLVREESVMPETIAIADDTLVPFLAGEAVRWTVKR.

Zn(2+) is bound by residues His17 and His19. Residues 19-21 (HLR) and Asn45 contribute to the substrate site. The Zn(2+) site is built by Lys103, His140, and His178. Lys103 carries the post-translational modification N6-carboxylysine. His140 provides a ligand contact to substrate. Residue Leu223 participates in substrate binding. Zn(2+) is bound at residue Asp251. Asp251 is a catalytic residue. The substrate site is built by His255 and Ala267.

It belongs to the metallo-dependent hydrolases superfamily. DHOase family. Class II DHOase subfamily. As to quaternary structure, homodimer. It depends on Zn(2+) as a cofactor.

The enzyme catalyses (S)-dihydroorotate + H2O = N-carbamoyl-L-aspartate + H(+). Its pathway is pyrimidine metabolism; UMP biosynthesis via de novo pathway; (S)-dihydroorotate from bicarbonate: step 3/3. Catalyzes the reversible cyclization of carbamoyl aspartate to dihydroorotate. The protein is Dihydroorotase of Cronobacter sakazakii (strain ATCC BAA-894) (Enterobacter sakazakii).